An 821-amino-acid chain; its full sequence is MSGNIGANPVIIIGCASAYAVEFNKDLIEAEDRENVNLSQFETDGQLPVGKYSLSTLINNKRTPIHLDLQWVLIDNQTAVCVTPEQLTLLGFTDEFIEKTQQNLIDGCYPIEKEKQITTYLDKGKMQLSISAPQAWLKYKDANWTPPELWNHGIAGAFLDYNLYASHYAPHQGDNSQNISSYGQAGVNLGAWRLRTDYQYDQSFNNGKSQATNLDFPRIYLFRPIPAMNAKLTIGQYDTESSIFDSFHFSGISLKSDENMLPPDLRGYAPQITGVAQTNAKVTVSQNNRIIYQENVPPGPFAITNLFNTLQGQLDVKVEEEDGRVTQWQVASNSIPYLTRKGQIRYTTAMGKPTSVGGDSLQQPFFWTGEFSWGWLNNVSLYGGSVLTNRDYQSLAAGVGFNLNSLGSLSFDVTRSDAQLHNQDKETGYSYRANYSKRFESTGSQLTFAGYRFSDKNFVTMNEYINDTNHYTNYQNEKESYIVTFNQYLESLRLNTYVSLARNTYWDASSNVNYSLSLSRDFDIGPLKNVSTSLTFSRINWEEDNQDQLYLNISIPWGTSRTLSYGMQRNQDNEISHTASWYDSSDRNNSWSVSASGDNDEFKDMKASLRASYQHNTENGRLYLSGTSQRDSYYSLNASWNGSFTATRHGAAFHDYSGSADSRFMIDADGTEDIPLNNKRAVTNRYGIGVIPSVSSYITTSLSVDTRNLPENVDIENSVITTTLTEGAIGYAKLDTRKGYQIIGVIRLADGSHPPLGISVKDETSHKELGLVADGGFVYLNGIQDDNKLALRWGDKSCFIQPPNSSNLTTGTAILPCISQN.

Positions 1-20 (MSGNIGANPVIIIGCASAYA) are cleaved as a signal peptide. Cys-798 and Cys-817 are joined by a disulfide.

Belongs to the fimbrial export usher family.

The protein localises to the cell outer membrane. Its function is as follows. May be involved in H(2) production during fermentative growth. Involved in the export and assembly of a fimbrial subunit across the outer membrane. This is Putative outer membrane usher protein YqiG (yqiG) from Escherichia coli (strain K12).